A 242-amino-acid chain; its full sequence is Phosphoribosylaminoimidazole-succinocarboxamide synthase (242 aa).

Belongs to the SAICAR synthetase family.

It catalyses the reaction 5-amino-1-(5-phospho-D-ribosyl)imidazole-4-carboxylate + L-aspartate + ATP = (2S)-2-[5-amino-1-(5-phospho-beta-D-ribosyl)imidazole-4-carboxamido]succinate + ADP + phosphate + 2 H(+). The protein operates within purine metabolism; IMP biosynthesis via de novo pathway; 5-amino-1-(5-phospho-D-ribosyl)imidazole-4-carboxamide from 5-amino-1-(5-phospho-D-ribosyl)imidazole-4-carboxylate: step 1/2. The polypeptide is Phosphoribosylaminoimidazole-succinocarboxamide synthase (Pediococcus pentosaceus (strain ATCC 25745 / CCUG 21536 / LMG 10740 / 183-1w)).